We begin with the raw amino-acid sequence, 369 residues long: Protein FAM187B (369 aa).

A signal peptide spans 1–17 (MPPMLWLLLHFAAPALG). The Extracellular segment spans residues 18-335 (FYFSISCPSG…RADSVLKGLK (318 aa)). 3 N-linked (GlcNAc...) asparagine glycosylation sites follow: Asn-45, Asn-68, and Asn-130. Residues 336 to 356 (LVLLVVTVLALLGALLKCIHP) form a helical membrane-spanning segment. Residues 357-369 (SPGRRSTQVLVVK) are Cytoplasmic-facing.

It belongs to the FAM187 family.

It is found in the membrane. The polypeptide is Protein FAM187B (FAM187B) (Homo sapiens (Human)).